The chain runs to 333 residues: Fructose-1,6-bisphosphatase class 1 (333 aa).

The Mg(2+) site is built by glutamate 90, aspartate 112, leucine 114, and aspartate 115. Substrate-binding positions include 115–118 (DGSS), asparagine 207, and lysine 273. A Mg(2+)-binding site is contributed by glutamate 279.

The protein belongs to the FBPase class 1 family. In terms of assembly, homotetramer. It depends on Mg(2+) as a cofactor.

The protein resides in the cytoplasm. The enzyme catalyses beta-D-fructose 1,6-bisphosphate + H2O = beta-D-fructose 6-phosphate + phosphate. Its pathway is carbohydrate biosynthesis; gluconeogenesis. This Aromatoleum aromaticum (strain DSM 19018 / LMG 30748 / EbN1) (Azoarcus sp. (strain EbN1)) protein is Fructose-1,6-bisphosphatase class 1.